The primary structure comprises 491 residues: Synaptotagmin-9 (491 aa).

The Vesicular portion of the chain corresponds to 1–52 (MPGARDALCHQALQLLAELCARGALEHDSCQDFIYHLRDRARPRLRDPDISV). Residues 9–31 (CHQALQLLAELCARGALEHDSCQ) are cysteine motif. A helical transmembrane segment spans residues 53–73 (SLLTLVVTACGLALFGVSLFV). Residues 74–491 (SWKLCWVPWR…AHWHSLLEKR (418 aa)) lie on the Cytoplasmic side of the membrane. The span at 91–104 (SKDNNQEPLNYTDT) shows a compositional bias: polar residues. Residues 91–147 (SKDNNQEPLNYTDTETNEQENSEDFLDPPTPCPDSSMKISHTSPDIPLSTQPGGQDN) are disordered. Positions 105 to 116 (ETNEQENSEDFL) are enriched in acidic residues. Over residues 127–144 (MKISHTSPDIPLSTQPGG) the composition is skewed to polar residues. A Phosphoserine modification is found at Ser-177. C2 domains lie at 220-341 (ACGK…ILWK) and 352-485 (DLGE…AHWH). Asp-251, Asp-257, Asp-309, Phe-310, Asp-311, Ser-314, Asp-317, Asp-383, Asp-389, Asp-443, and Asp-445 together coordinate Ca(2+).

It belongs to the synaptotagmin family. Homodimer; disulfide-linked via the cysteine motif. Can also form heterodimers with SYT3, SYT6, SYT7 and SYT10. The cofactor is Ca(2+).

It is found in the cytoplasmic vesicle. The protein localises to the secretory vesicle. Its subcellular location is the synaptic vesicle membrane. In terms of biological role, may be involved in Ca(2+)-dependent exocytosis of secretory vesicles through Ca(2+) and phospholipid binding to the C2 domain or may serve as Ca(2+) sensors in the process of vesicular trafficking and exocytosis. This chain is Synaptotagmin-9 (Syt9), found in Rattus norvegicus (Rat).